The following is a 924-amino-acid chain: Aminopeptidase 2 (924 aa).

Positions 1 to 45 (MASNNTSQRSGFSSFFCRLKTYFCNHFLCLFVLSFFPLSFRRLCL) are cleaved as a signal peptide. The propeptide occupies 46-57 (LCHLCEKSNLWL). S58 carries the N-acetylserine; partial modification. N92 carries an N-linked (GlcNAc...) asparagine glycan. Substrate is bound at residue E194. N229 carries N-linked (GlcNAc...) asparagine glycosylation. A substrate-binding site is contributed by 327-331 (GAMEN). Position 363 (H363) interacts with Zn(2+). The active-site Proton acceptor is the E364. Residues H367 and E386 each contribute to the Zn(2+) site.

The protein belongs to the peptidase M1 family. It depends on Zn(2+) as a cofactor.

It localises to the secreted. It is found in the cell wall. With respect to regulation, inactivated by metal-chelating agents phenanthroline and EDTA. Inhibited by bestatin, an aminopeptidase inhibitor. Not inhibited by pepstatin A and PMSF, inhibitors of aspartic and the serine proteases, respectively. Not inhibited by carboxypeptidase inhibitor. Metalloprotease that specifically hydrolyzes peptides with N-terminal alanine, arginine and leucine residues. The chain is Aminopeptidase 2 (APE2) from Candida albicans (strain SC5314 / ATCC MYA-2876) (Yeast).